Here is a 361-residue protein sequence, read N- to C-terminus: DNA replication and repair protein RecF (361 aa).

An ATP-binding site is contributed by 30–37; the sequence is GANGSGKT.

It belongs to the RecF family.

The protein resides in the cytoplasm. In terms of biological role, the RecF protein is involved in DNA metabolism; it is required for DNA replication and normal SOS inducibility. RecF binds preferentially to single-stranded, linear DNA. It also seems to bind ATP. The polypeptide is DNA replication and repair protein RecF (Chromohalobacter salexigens (strain ATCC BAA-138 / DSM 3043 / CIP 106854 / NCIMB 13768 / 1H11)).